Consider the following 1092-residue polypeptide: DNA polymerase II large subunit (1092 aa).

Belongs to the archaeal DNA polymerase II family. In terms of assembly, heterodimer of a large subunit and a small subunit.

The catalysed reaction is DNA(n) + a 2'-deoxyribonucleoside 5'-triphosphate = DNA(n+1) + diphosphate. The enzyme catalyses Exonucleolytic cleavage in the 3'- to 5'-direction to yield nucleoside 5'-phosphates.. Possesses two activities: a DNA synthesis (polymerase) and an exonucleolytic activity that degrades single-stranded DNA in the 3'- to 5'-direction. Has a template-primer preference which is characteristic of a replicative DNA polymerase. This Methanothermobacter thermautotrophicus (strain ATCC 29096 / DSM 1053 / JCM 10044 / NBRC 100330 / Delta H) (Methanobacterium thermoautotrophicum) protein is DNA polymerase II large subunit (polC).